The primary structure comprises 72 residues: Translation initiation factor IF-1 (72 aa).

The region spanning 1 to 72 is the S1-like domain; it reads MAKDDVIEVE…TRGRITYRYK (72 aa). Tyr-60 carries the phosphotyrosine modification.

Belongs to the IF-1 family. Component of the 30S ribosomal translation pre-initiation complex which assembles on the 30S ribosome in the order IF-2 and IF-3, IF-1 and N-formylmethionyl-tRNA(fMet); mRNA recruitment can occur at any time during PIC assembly.

Its subcellular location is the cytoplasm. Its function is as follows. One of the essential components for the initiation of protein synthesis. Stabilizes the binding of IF-2 and IF-3 on the 30S subunit to which N-formylmethionyl-tRNA(fMet) subsequently binds. Helps modulate mRNA selection, yielding the 30S pre-initiation complex (PIC). Upon addition of the 50S ribosomal subunit IF-1, IF-2 and IF-3 are released leaving the mature 70S translation initiation complex. The chain is Translation initiation factor IF-1 from Oceanobacillus iheyensis (strain DSM 14371 / CIP 107618 / JCM 11309 / KCTC 3954 / HTE831).